The primary structure comprises 197 residues: NADH-quinone oxidoreductase subunit C (197 aa).

Belongs to the complex I 30 kDa subunit family. NDH-1 is composed of 14 different subunits. Subunits NuoB, C, D, E, F, and G constitute the peripheral sector of the complex.

The protein localises to the cell inner membrane. It catalyses the reaction a quinone + NADH + 5 H(+)(in) = a quinol + NAD(+) + 4 H(+)(out). Its function is as follows. NDH-1 shuttles electrons from NADH, via FMN and iron-sulfur (Fe-S) centers, to quinones in the respiratory chain. The immediate electron acceptor for the enzyme in this species is believed to be ubiquinone. Couples the redox reaction to proton translocation (for every two electrons transferred, four hydrogen ions are translocated across the cytoplasmic membrane), and thus conserves the redox energy in a proton gradient. The protein is NADH-quinone oxidoreductase subunit C of Caulobacter vibrioides (strain ATCC 19089 / CIP 103742 / CB 15) (Caulobacter crescentus).